A 369-amino-acid polypeptide reads, in one-letter code: Histidinol-phosphate aminotransferase 2 (369 aa).

Position 231 is an N6-(pyridoxal phosphate)lysine (Lys231).

The protein belongs to the class-II pyridoxal-phosphate-dependent aminotransferase family. Histidinol-phosphate aminotransferase subfamily. Homodimer. The cofactor is pyridoxal 5'-phosphate.

The enzyme catalyses L-histidinol phosphate + 2-oxoglutarate = 3-(imidazol-4-yl)-2-oxopropyl phosphate + L-glutamate. The protein operates within amino-acid biosynthesis; L-histidine biosynthesis; L-histidine from 5-phospho-alpha-D-ribose 1-diphosphate: step 7/9. The chain is Histidinol-phosphate aminotransferase 2 from Legionella pneumophila (strain Paris).